A 419-amino-acid polypeptide reads, in one-letter code: CDP-diacylglycerol--serine O-phosphatidyltransferase 3 (419 aa).

Positions 1–51 are disordered; the sequence is MPVRRRWYPPSSTAAQPSPDGGDVNTDDADACPSSRQQRPPSLPQHSAPIH. The span at 33–47 shows a compositional bias: low complexity; the sequence is PSSRQQRPPSLPQHS. Helical transmembrane passes span 103 to 123, 142 to 162, 168 to 188, 260 to 280, 287 to 307, 359 to 379, and 384 to 404; these read PHTV…SGVL, WAMI…TILI, VWRL…FLLF, LLLW…RHML, WWDS…WAGM, FIQV…TFFL, and WIPP…LIAI.

Belongs to the CDP-alcohol phosphatidyltransferase class-I family.

The protein resides in the endoplasmic reticulum membrane. The enzyme catalyses a CDP-1,2-diacyl-sn-glycerol + L-serine = a 1,2-diacyl-sn-glycero-3-phospho-L-serine + CMP + H(+). It participates in phospholipid metabolism; phosphatidylethanolamine biosynthesis; phosphatidylethanolamine from CDP-diacylglycerol: step 1/2. Its function is as follows. Catalyzes a base-exchange reaction in which the polar head group of phosphatidylethanolamine (PE) or phosphatidylcholine (PC) is replaced by L-serine. This is CDP-diacylglycerol--serine O-phosphatidyltransferase 3 (PSS3) from Oryza sativa subsp. japonica (Rice).